The sequence spans 341 residues: Ribosomal RNA small subunit methyltransferase H (341 aa).

S-adenosyl-L-methionine is bound by residues 47-49 (GGY), aspartate 64, phenylalanine 91, aspartate 109, and glutamine 116.

Belongs to the methyltransferase superfamily. RsmH family.

It is found in the cytoplasm. The enzyme catalyses cytidine(1402) in 16S rRNA + S-adenosyl-L-methionine = N(4)-methylcytidine(1402) in 16S rRNA + S-adenosyl-L-homocysteine + H(+). Functionally, specifically methylates the N4 position of cytidine in position 1402 (C1402) of 16S rRNA. This Rhizobium etli (strain ATCC 51251 / DSM 11541 / JCM 21823 / NBRC 15573 / CFN 42) protein is Ribosomal RNA small subunit methyltransferase H.